The chain runs to 2769 residues: Thyroglobulin (2769 aa).

The N-terminal stretch at 1 to 19 (MALALWVFGLLDLICLASA) is a signal peptide. Position 24 is an iodotyrosine; alternate (Tyr24). Position 24 is a sulfotyrosine; alternate (Tyr24). Tyr24 is modified (thyroxine; alternate). Residue Tyr24 is modified to Triiodothyronine; alternate. Thyroglobulin type-1 domains are found at residues 31–92 (LRPC…PAAC), 93–160 (LSFC…PARC), 161–297 (PRSC…RFRC), and 298–358 (PTKC…PPSC). Intrachain disulfides connect Cys34-Cys52, Cys63-Cys70, Cys72-Cys92, Cys96-Cys120, Cys131-Cys138, Cys140-Cys160, Cys164-Cys183, and Cys194-Cys235. Tyr108 is subject to Iodotyrosine. An N-linked (GlcNAc...) (complex) asparagine; alternate glycan is attached at Asn110. The N-linked (GlcNAc...) (hybrid) asparagine; alternate glycan is linked to Asn110. Tyr149 carries the post-translational modification Iodotyrosine; alternate. Tyr149 bears the Diiodotyrosine; alternate mark. Tyr234 and Tyr258 each carry iodotyrosine. 9 cysteine pairs are disulfide-bonded: Cys301–Cys319, Cys330–Cys336, Cys338–Cys358, Cys364–Cys619, Cys408–Cys607, Cys630–Cys635, Cys637–Cys657, Cys661–Cys686, and Cys697–Cys702. N-linked (GlcNAc...) (complex) asparagine; alternate glycosylation is found at Asn483 and Asn495. 2 N-linked (GlcNAc...) (hybrid) asparagine; alternate glycosylation sites follow: Asn483 and Asn495. Thyroglobulin type-1 domains lie at 604–657 (SQGC…RPRC), 658–725 (PTEC…PKKC), 726–921 (PSPC…VPAC), 922–1073 (PGSC…IPQC), 1074–1145 (PTSC…SAQC), and 1146–1210 (PSLC…QPAC). Tyr703 carries the iodotyrosine; alternate modification. Thyroxine; alternate is present on Tyr703. Tyr703 is subject to Triiodothyronine; alternate. Tyr703 is modified (diiodotyrosine; alternate). Intrachain disulfides connect Cys704–Cys725, Cys729–Cys762, Cys773–Cys898, Cys900–Cys921, Cys925–Cys1031, Cys1042–Cys1049, Cys1051–Cys1073, Cys1077–Cys1108, Cys1126–Cys1145, Cys1149–Cys1169, Cys1181–Cys1188, Cys1190–Cys1210, Cys1215–Cys1264, Cys1231–Cys1245, Cys1306–Cys1356, and Cys1331–Cys1347. Residue Tyr784 is modified to Iodotyrosine. The N-linked (GlcNAc...) (complex) asparagine; alternate glycan is linked to Asn853. An N-linked (GlcNAc...) (hybrid) asparagine; alternate glycan is attached at Asn853. Residue Tyr866 is modified to Iodotyrosine; alternate. Residue Tyr866 is modified to Diiodotyrosine; alternate. The residue at position 883 (Tyr883) is a Diiodotyrosine. Asn947 carries an N-linked (GlcNAc...) (complex) asparagine; alternate glycan. The N-linked (GlcNAc...) (hybrid) asparagine; alternate glycan is linked to Asn947. The residue at position 992 (Tyr992) is an Iodotyrosine; alternate. At Tyr992 the chain carries Diiodotyrosine; alternate. N-linked (GlcNAc...) (complex) asparagine; alternate glycosylation occurs at Asn1140. N-linked (GlcNAc...) (hybrid) asparagine; alternate glycosylation is present at Asn1140. Tyr1310 carries the iodotyrosine modification. Tyr1310 carries the thyroxine modification. Asn1365 carries N-linked (GlcNAc...) (high mannose) asparagine glycosylation. Intrachain disulfides connect Cys1441–Cys1461, Cys1464–Cys1475, Cys1478–Cys1492, Cys1495–Cys1512, Cys1516–Cys1525, Cys1545–Cys1567, Cys1605–Cys1629, Cys1609–Cys1615, Cys1641–Cys1664, Cys1726–Cys1751, Cys1730–Cys1736, Cys1735–Cys1836, and Cys1762–Cys1779. Type II repeat units follow at residues 1458–1471 (ALGC…SYFQ), 1472–1488 (DEQC…EQAG), and 1489–1505 (SLAC…VYAG). Tyr1469 carries the iodotyrosine; alternate modification. Tyr1469 bears the Diiodotyrosine; alternate mark. Residues 1513 to 1567 (VTDCQKNEVGLQCDQDSQYRASQRDRTSGKAFCVDGEGRRLPWTEAEAPLVDAQC) form the Thyroglobulin type-1 11 domain. One copy of the Type IIIA repeat lies at 1605–1725 (CLADCALDEA…GASLAEVHLF (121 aa)). One copy of the Type IIIB repeat lies at 1726–1893 (CLLACDHDSC…LFSLQQANLW (168 aa)). Residue Asn1776 is glycosylated (N-linked (GlcNAc...) (complex) asparagine; alternate). N-linked (GlcNAc...) (hybrid) asparagine; alternate glycosylation occurs at Asn1776. The segment covering 1827–1842 (MGSRSESMGCRRDTEP) has biased composition (basic and acidic residues). The interval 1827-1851 (MGSRSESMGCRRDTEPRPASPSETD) is disordered. Asn1870 is a glycosylation site (N-linked (GlcNAc...) (complex) asparagine; alternate). Asn1870 is a glycosylation site (N-linked (GlcNAc...) (hybrid) asparagine; alternate). Intrachain disulfides connect Cys1894-Cys1920, Cys1898-Cys1905, Cys1929-Cys1940, Cys1997-Cys2025, Cys2001-Cys2007, Cys2006-Cys2077, and Cys2036-Cys2049. Residues 1894–1996 (CLSRCAGEPS…DKSISSGFFE (103 aa)) form a Type IIIA repeat. One copy of the Type IIIB repeat lies at 1997-2130 (CERLCDMDPC…VGNFSAARDR (134 aa)). A glycan (N-linked (GlcNAc...) (high mannose) asparagine) is linked at Asn2014. Asn2123 carries N-linked (GlcNAc...) (high mannose) asparagine glycosylation. 3 cysteine pairs are disulfide-bonded: Cys2131-Cys2155, Cys2135-Cys2141, and Cys2164-Cys2173. One copy of the Type IIIA repeat lies at 2131–2188 (CLWECSRHQDCLVTTLQTQPGAVRCMFYADTQSCTHSLQAQNCRLLLHEEATYIYRKP). Position 2185 is an iodotyrosine (Tyr2185). The interval 2189–2769 (NIPLPGFGTS…PELASKTYSK (581 aa)) is cholinesterase-like (ChEL). Asn2251 carries N-linked (GlcNAc...) (complex) asparagine; alternate glycosylation. N-linked (GlcNAc...) (hybrid) asparagine; alternate glycosylation occurs at Asn2251. Asn2296 is a glycosylation site (N-linked (GlcNAc...) (high mannose) asparagine). A disulfide bridge links Cys2443 with Cys2454. Thyroxine is present on Tyr2541. Tyr2574 is modified (iodotyrosine; alternate). Residue Tyr2574 is modified to Thyroxine; alternate. Position 2574 is a triiodothyronine; alternate (Tyr2574). At Tyr2574 the chain carries Diiodotyrosine; alternate. Iodotyrosine occurs at positions 2588 and 2618. Cys2592 and Cys2716 are disulfide-bonded. Tyr2698 bears the Diiodotyrosine mark. Residues 2730–2769 (ADETKDGPSADSEEEDQPAGSGLTEDLLGLPELASKTYSK) are disordered. Position 2767 is an iodotyrosine; alternate (Tyr2767). A Thyroxine; alternate modification is found at Tyr2767. At Tyr2767 the chain carries Triiodothyronine; alternate. At Tyr2767 the chain carries Diiodotyrosine; alternate.

This sequence belongs to the type-B carboxylesterase/lipase family. In terms of assembly, monomer. Homodimer (via ChEL region); occurs in the endoplasmic reticulum and is required for export to the Golgi apparatus. Homooligomer; disulfide-linked; stored in this form in the thyroid follicle lumen. In terms of processing, iodinated on tyrosine residues by TPO. There are 4 pairs of iodinated tyrosines used for coupling: acceptor Tyr-24 is coupled to donor Tyr-149 or Tyr-234, acceptor Tyr-2574 is coupled to donor Tyr-2541, acceptor Tyr-2767 in monomer 1 is coupled to donor Tyr-2767 in monomer 2 and acceptor Tyr-1310 in monomer 1 is coupled to donor Tyr-108 in monomer 2. Post-translationally, sulfated tyrosines are desulfated during iodination. Undergoes sequential proteolysis by cathepsins to release thyroxine (T4) and triiodothyronine (T3) hormones. In the thyroid follicle lumen, cross-linked TG (storage form) is solubilized by limited proteolysis mediated by cathepsins CTSB and/or CTSL. Partially cleaved TG is further processed by CTSK/cathepsin K and/or CTSL resulting in the release of T4. Following endocytosis, further processing occurs leading to the release of T3 and more T4 hormones. In terms of tissue distribution, specifically expressed in the thyroid gland.

Its subcellular location is the secreted. Its function is as follows. Acts as a substrate for the production of iodinated thyroid hormones thyroxine (T4) and triiodothyronine (T3). The synthesis of T3 and T4 involves iodination of selected tyrosine residues of TG/thyroglobulin followed by their oxidative coupling. Following TG re-internalization and lysosomal-mediated proteolysis, T3 and T4 are released from the polypeptide backbone leading to their secretion into the bloodstream. One dimer produces 7 thyroid hormone molecules. In Bos taurus (Bovine), this protein is Thyroglobulin (TG).